A 166-amino-acid polypeptide reads, in one-letter code: Regulatory protein RecX (166 aa).

The protein belongs to the RecX family.

The protein resides in the cytoplasm. Functionally, modulates RecA activity. The sequence is that of Regulatory protein RecX from Salmonella paratyphi C (strain RKS4594).